A 189-amino-acid polypeptide reads, in one-letter code: Dual specificity phosphatase 29 (189 aa).

A Tyrosine-protein phosphatase domain is found at His33–Glu182. His126–Arg133 lines the substrate pocket. Catalysis depends on Cys127, which acts as the Phosphocysteine intermediate.

Belongs to the protein-tyrosine phosphatase family. Non-receptor class dual specificity subfamily.

It localises to the cytoplasm. The protein resides in the nucleus. The catalysed reaction is O-phospho-L-tyrosyl-[protein] + H2O = L-tyrosyl-[protein] + phosphate. It carries out the reaction O-phospho-L-seryl-[protein] + H2O = L-seryl-[protein] + phosphate. The enzyme catalyses O-phospho-L-threonyl-[protein] + H2O = L-threonyl-[protein] + phosphate. Functionally, dual specificity phosphatase able to dephosphorylate phosphotyrosine, phosphoserine and phosphothreonine residues within the same substrate, with a preference for phosphotyrosine as a substrate. Involved in the modulation of AMPK and MAPK1/2 signaling pathways. The sequence is that of Dual specificity phosphatase 29 (dusp29) from Danio rerio (Zebrafish).